The following is a 538-amino-acid chain: Calcium-dependent protein kinase 32 (538 aa).

The disordered stretch occupies residues Met-1–Gly-37. A lipid anchor (N-myristoyl glycine) is attached at Gly-2. The Protein kinase domain maps to Tyr-63–Leu-321. ATP-binding positions include Leu-69–Thr-77 and Lys-92. Asp-187 serves as the catalytic Proton acceptor. Residue Ser-227 is modified to Phosphoserine. Positions Ala-327–Ile-357 are autoinhibitory domain. 4 EF-hand domains span residues Glu-364–Ala-399, Ile-400–Met-435, Gly-436–Gly-470, and Thr-471–Trp-506. Positions 377, 379, 383, 388, 413, 415, 417, 419, 424, 449, 451, 453, 455, 460, 484, 486, 488, and 490 each coordinate Ca(2+). Ser-492 is modified (phosphoserine). Ca(2+) is bound at residue Glu-495.

The protein belongs to the protein kinase superfamily. Ser/Thr protein kinase family. CDPK subfamily. Interacts with ABF4. Interacts with CNGC18. In terms of tissue distribution, expressed in embryos and most of the vegetative tissues.

The protein resides in the nucleus. Its subcellular location is the membrane. The catalysed reaction is L-seryl-[protein] + ATP = O-phospho-L-seryl-[protein] + ADP + H(+). The enzyme catalyses L-threonyl-[protein] + ATP = O-phospho-L-threonyl-[protein] + ADP + H(+). Its activity is regulated as follows. Activated by calcium. Autophosphorylation may play an important role in the regulation of the kinase activity. In terms of biological role, may play a role in signal transduction pathways that involve calcium as a second messenger. Involved in maintaining Ca2+ homeostasis in pollen tube tips by regulating CNGC18. Functions as regulator of the calcium-mediated abscisic acid (ABA) signaling pathway. Phosphorylates ABA-responsive transcription factor ABF4 in vitro. This chain is Calcium-dependent protein kinase 32, found in Arabidopsis thaliana (Mouse-ear cress).